The chain runs to 591 residues: V-type ATP synthase alpha chain (591 aa).

233–240 (GPFGAGKT) serves as a coordination point for ATP.

Belongs to the ATPase alpha/beta chains family.

The enzyme catalyses ATP + H2O + 4 H(+)(in) = ADP + phosphate + 5 H(+)(out). Produces ATP from ADP in the presence of a proton gradient across the membrane. The V-type alpha chain is a catalytic subunit. The polypeptide is V-type ATP synthase alpha chain (Streptococcus pyogenes serotype M2 (strain MGAS10270)).